A 148-amino-acid chain; its full sequence is General odorant-binding protein 69a (148 aa).

The first 23 residues, 1–23 (MVARHFSFFLALLILYDLIPSNQ), serve as a signal peptide directing secretion. 3 cysteine pairs are disulfide-bonded: Cys-42-Cys-74, Cys-70-Cys-121, and Cys-112-Cys-130.

It belongs to the PBP/GOBP family. Expressed in the antenna, mostly on the anterior surface of the third antennal segment. Expressed in auxiliary cells and the third antennal segment and exported to the sensillar lymph (at protein level).

It is found in the secreted. Functionally, odorant-binding protein required for olfactory behavior and activity of pheromone-sensitive neurons in response to the male-specific pheromone cis-vaccenyl acetate (cVA). Modulates social responsivity differently in males and females, regulating male aggression and female receptivity respectively. The polypeptide is General odorant-binding protein 69a (Obp69a) (Drosophila melanogaster (Fruit fly)).